Reading from the N-terminus, the 203-residue chain is Thymidylate kinase (203 aa).

9-16 (GPEGSGKT) contributes to the ATP binding site.

The protein belongs to the thymidylate kinase family.

It carries out the reaction dTMP + ATP = dTDP + ADP. Phosphorylation of dTMP to form dTDP in both de novo and salvage pathways of dTTP synthesis. This is Thymidylate kinase from Staphylococcus haemolyticus (strain JCSC1435).